The sequence spans 347 residues: Probable dual-specificity RNA methyltransferase RlmN (347 aa).

Glu90 (proton acceptor) is an active-site residue. Residues 96 to 326 (YKHGNSICIS…VTVRREMGSD (231 aa)) form the Radical SAM core domain. Cys103 and Cys331 are oxidised to a cystine. Residues Cys110, Cys114, and Cys117 each contribute to the [4Fe-4S] cluster site. S-adenosyl-L-methionine-binding positions include 157 to 158 (GE), Ser189, 212 to 214 (SLH), and Asn288. Catalysis depends on Cys331, which acts as the S-methylcysteine intermediate.

Belongs to the radical SAM superfamily. RlmN family. The cofactor is [4Fe-4S] cluster.

Its subcellular location is the cytoplasm. The enzyme catalyses adenosine(2503) in 23S rRNA + 2 reduced [2Fe-2S]-[ferredoxin] + 2 S-adenosyl-L-methionine = 2-methyladenosine(2503) in 23S rRNA + 5'-deoxyadenosine + L-methionine + 2 oxidized [2Fe-2S]-[ferredoxin] + S-adenosyl-L-homocysteine. The catalysed reaction is adenosine(37) in tRNA + 2 reduced [2Fe-2S]-[ferredoxin] + 2 S-adenosyl-L-methionine = 2-methyladenosine(37) in tRNA + 5'-deoxyadenosine + L-methionine + 2 oxidized [2Fe-2S]-[ferredoxin] + S-adenosyl-L-homocysteine. Specifically methylates position 2 of adenine 2503 in 23S rRNA and position 2 of adenine 37 in tRNAs. This Clostridium botulinum (strain Alaska E43 / Type E3) protein is Probable dual-specificity RNA methyltransferase RlmN.